The following is a 524-amino-acid chain: Zinc finger CCCH domain-containing protein 37 (524 aa).

Residues 19–39 (ASTVSPAPPPPQQPLPPKTGL) are disordered. The segment covering 24 to 35 (PAPPPPQQPLPP) has biased composition (pro residues). 3 consecutive C3H1-type zinc fingers follow at residues 174 to 202 (RAGE…HPIW), 225 to 253 (RPGE…HPRE), and 268 to 296 (RPSE…HPKD). Residues 300 to 319 (PSSSQDIGSSVGLTSEPDAT) form a disordered region. 3 C3H1-type zinc fingers span residues 340 to 368 (RSGE…HPER), 420 to 448 (RPGQ…HPAD), and 473 to 501 (REGA…HPPP). A disordered region spans residues 505-524 (MAKTTSEADAAGATNTDTTQ). A compositionally biased stretch (low complexity) spans 512–524 (ADAAGATNTDTTQ).

In terms of assembly, interacts with HEN4. Interacts with FLK and PEP. In terms of tissue distribution, highly expressed in inflorescences, at intermediate levels in leaves and stems and at lower levels in roots.

Its subcellular location is the nucleus speckle. Involved in flower development. Functions in floral reproductive organ identity by binding AGAMOUS (AG) pre-mRNA and promoting its processing. Functions in association with HUA2 and HEN4. In Arabidopsis thaliana (Mouse-ear cress), this protein is Zinc finger CCCH domain-containing protein 37 (HUA1).